Here is a 161-residue protein sequence, read N- to C-terminus: Large ribosomal subunit protein uL15 (161 aa).

Residues 1 to 43 (MKLSEISDNPGARKKRMRIGRGIGSGKGKTGGRGGKGQTARSG) form a disordered region. The span at 21–37 (RGIGSGKGKTGGRGGKG) shows a compositional bias: gly residues.

Belongs to the universal ribosomal protein uL15 family. As to quaternary structure, part of the 50S ribosomal subunit.

Binds to the 23S rRNA. The chain is Large ribosomal subunit protein uL15 from Rhodopseudomonas palustris (strain HaA2).